The primary structure comprises 485 residues: N-succinylglutamate 5-semialdehyde dehydrogenase (485 aa).

220–225 lines the NAD(+) pocket; that stretch reads GSANTG. Active-site residues include Glu243 and Cys278.

It belongs to the aldehyde dehydrogenase family. AstD subfamily.

The catalysed reaction is N-succinyl-L-glutamate 5-semialdehyde + NAD(+) + H2O = N-succinyl-L-glutamate + NADH + 2 H(+). The protein operates within amino-acid degradation; L-arginine degradation via AST pathway; L-glutamate and succinate from L-arginine: step 4/5. Its function is as follows. Catalyzes the NAD-dependent reduction of succinylglutamate semialdehyde into succinylglutamate. This chain is N-succinylglutamate 5-semialdehyde dehydrogenase, found in Vibrio campbellii (strain ATCC BAA-1116).